We begin with the raw amino-acid sequence, 370 residues long: D-aspartate oxidase (370 aa).

A signal peptide spans 1–18 (MPPRIIILGAGIIGLSTA). The FAD site is built by Ile13, Glu42, Ala63, Ser64, and Gly68. N-linked (GlcNAc...) asparagine glycosylation occurs at Asn207. FAD contacts are provided by Arg308, Gly338, and Tyr339.

This sequence belongs to the DAMOX/DASOX family. Monomer. FAD is required as a cofactor.

The enzyme catalyses D-aspartate + O2 + H2O = oxaloacetate + H2O2 + NH4(+). It carries out the reaction D-glutamate + O2 + H2O = H2O2 + 2-oxoglutarate + NH4(+). Functionally, selectively catalyzes the oxidative deamination of acidic amino acids. Protects the organism from the toxicity of D-amino acids. Enables the organism to utilize D-amino acids as a source of nutrients. In Talaromyces thermophilus, this protein is D-aspartate oxidase.